We begin with the raw amino-acid sequence, 2690 residues long: Non-reducing polyketide synthase pigA (2690 aa).

Residues 96-211 (NILLSPLVVI…AELSRVLQDF (116 aa)) form the Starter acyltransferase (SAT) domain. C140 serves as the catalytic Nucleophile; for transacylase activity. H258 (proton donor/acceptor; for transacylase activity) is an active-site residue. One can recognise a Ketosynthase family 3 (KS3) domain in the interval 388-804 (ENDIAVIGMS…GSNASLIVTQ (417 aa)). Residues C553, H688, and H727 each act as for beta-ketoacyl synthase activity in the active site. A Malonyl-CoA:ACP transacylase (MAT) domain is found at 915–1182 (FGGQISTFVG…VQRLAKQHPS (268 aa)). The tract at residues 1296 to 1426 (LTFVGYQDKD…GKVFFRSVDD (131 aa)) is N-terminal hotdog fold. The 307-residue stretch at 1296–1602 (LTFVGYQDKD…YAKVPKMSMS (307 aa)) folds into the PKS/mFAS DH domain. The tract at residues 1323 to 1600 (LVSGHLIAQT…INYAKVPKMS (278 aa)) is product template (PT) domain. H1327 (proton acceptor; for dehydratase activity) is an active-site residue. The interval 1454 to 1602 (ADDIIQGRNI…YAKVPKMSMS (149 aa)) is C-terminal hotdog fold. D1510 acts as the Proton donor; for dehydratase activity in catalysis. The Carrier 1 domain occupies 1657-1731 (PDISGKVRAM…GLLRCIQEAL (75 aa)). S1691 is subject to O-(pantetheine 4'-phosphoryl)serine. The segment at 1731-1764 (LGPSEGVEEETDNEEGEDGESSENPSVFTPSDAA) is disordered. Over residues 1736–1751 (GVEEETDNEEGEDGES) the composition is skewed to acidic residues. The span at 1755–1764 (PSVFTPSDAA) shows a compositional bias: polar residues. In terms of domain architecture, Carrier 2 spans 1768–1842 (SSAKADVAEF…EFDVKVNGKS (75 aa)). S1802 is modified (O-(pantetheine 4'-phosphoryl)serine). The methyltransferase domain stretch occupies residues 1948–2255 (QTLERIKYLP…EVNIQRIFLA (308 aa)). In terms of domain architecture, Thioester reductase (TE) spans 2320–2564 (VTGATGSLGS…LSWTPVNDVA (245 aa)).

It depends on pantetheine 4'-phosphate as a cofactor.

It participates in secondary metabolite biosynthesis. In terms of biological role, non-reducing polyketide synthase; part of the gene cluster that mediates the biosynthesis of azaphilone pigments (MonAzPs), a complex mixture of compounds with a common azaphilone skeleton very widely used as food colorants. PigA catalyzes the first step of MonAzPs biosynthesis and forms the hexaketide precursor from successive condensations of five malonyl-CoA units, with a simple acetyl-CoA starter unit. The starter acyl transferase (SAT) domain of pigA selects an acetyl-CoA starter unit, and the ketoacyl synthase (KS)-acyl transferase (AT)-acyl carrier protein (ACP) domains extend this starter unit five times with malonyl-CoA in five successive decarboxylative Claisen condensation cycles. The methyltransferase (MT) domain conducts a single C-methylation at C-4, most likely at the pentaketide stage. The reactive hexaketide chain then undergoes a product template (PT) domain-mediated C-2 to C-7 aldol cyclization to afford the first aromatic ring, followed by reductive release of the first pathway intermediate by the NADPH-dependent reductive release (R) domain. The role of esterase pigG is not clear, but it may play at most a supplementary role in the formation of the benzaldehyde produced by the pigA nrPKS. This very reactive benzaldehyde is intercepted by the pigC ketoreductase that to provide the first stable enzyme-free MonAzPs intermediate, 6-(4-hydroxy-2-oxopentyl)-3-methyl-2,4-dioxocyclohexane carbaldehyde, also known as M7PKS-1. The FAD-dependent monooxygenase pigN hydroxylates M7PKS-1 at C-4, which triggers the formation of the pyran ring. PigJ, pigK and pigD are involved in the acetylation of the pyran ring. PigJ and pigK form the two subunits of a dedicated fungal FAS that produces the side chain fatty acyl moiety of MonAzPs and pigD transfers the fatty acyl chain to the C-4 alcohol. PigM and pigO are involved in the elimination of the omega-1 alcohol. PigM acts as an O-acetyltransferase that synthesizes the putative O-11 acetyl intermediate whereas pigO eliminates acetic acid to yield an intermediate with a C10(11) double bond. The dehydration of the C-11 alcohol followed by the reduction of the C6(7) double bond by the NAD(P)H-dependent oxidoreductase pigE increases the electrophilicity of the C-5 ketone of the resulting acyl benzopyran. This in turn sets up the C-5 ketone for an intramolecular Knoevenagel aldol condensation with the C-20 enol of the side chain. This condensation affords the characteristic linear tricyclic carbon skeletons of the yellow pigments that serve as the common precursors for the classical yellow pigments monascin and ankaflavin, orange pigments rubopunctatin and monascorubrin, and red pigments ribropunctamine and monascorubramine. The FAD-dependent oxidoreductase pigF is especially invoved in the biosynthesis of orange and red pigments via desaturation of C6(7). The sequence is that of Non-reducing polyketide synthase pigA from Monascus ruber (Mold).